The chain runs to 226 residues: UPF0758 protein SUB0843 (226 aa).

The MPN domain occupies 103–225; sequence QILSSYQVAK…YYSFREKSDI (123 aa). Zn(2+)-binding residues include histidine 174, histidine 176, and aspartate 187. The JAMM motif signature appears at 174–187; the sequence is HNHPSGLTNPSEND.

It belongs to the UPF0758 family.

This is UPF0758 protein SUB0843 from Streptococcus uberis (strain ATCC BAA-854 / 0140J).